A 187-amino-acid chain; its full sequence is Elongation factor P (187 aa).

This sequence belongs to the elongation factor P family.

It localises to the cytoplasm. It participates in protein biosynthesis; polypeptide chain elongation. In terms of biological role, involved in peptide bond synthesis. Stimulates efficient translation and peptide-bond synthesis on native or reconstituted 70S ribosomes in vitro. Probably functions indirectly by altering the affinity of the ribosome for aminoacyl-tRNA, thus increasing their reactivity as acceptors for peptidyl transferase. The sequence is that of Elongation factor P from Helicobacter acinonychis (strain Sheeba).